Reading from the N-terminus, the 77-residue chain is Metallothionein-like protein type 2 (77 aa).

Belongs to the metallothionein superfamily. Type 15 family. In terms of tissue distribution, expressed in the left, stem and flower, at very low levels in roots and is not detectable in mesophyll protoplasts.

Metallothioneins have a high content of cysteine residues that bind various heavy metals. The protein is Metallothionein-like protein type 2 (MTI) of Vicia faba (Broad bean).